We begin with the raw amino-acid sequence, 214 residues long: uncharacterized protein (214 aa).

The signal sequence occupies residues 1-24 (MVTPHGILLLTITAAASLLWITFA). Residues 99-121 (APNDTQEQNSTRNKRDSESYTAT) form a disordered region. A compositionally biased stretch (polar residues) spans 100–109 (PNDTQEQNST).

In terms of tissue distribution, component of the acid-insoluble and acid-soluble organic matrix of the aragonitic skeleton (at protein level).

Its subcellular location is the secreted. This is an uncharacterized protein from Acropora millepora (Staghorn coral).